A 983-amino-acid chain; its full sequence is Protein translocase subunit SecA (983 aa).

Residues Q83, 101 to 105, and D489 contribute to the ATP site; that span reads GEGKT. Residues 948 to 983 form a disordered region; sequence ISSEEEDNNEKTNINNNEDLERTKGEAQQTAKNPNE. Residues 973 to 983 are compositionally biased toward polar residues; sequence EAQQTAKNPNE.

The protein belongs to the SecA family. Monomer and homodimer. Part of the essential Sec protein translocation apparatus which comprises SecA, SecYEG and auxiliary proteins SecDF. Other proteins may also be involved.

It is found in the cell membrane. It localises to the cytoplasm. The enzyme catalyses ATP + H2O + cellular proteinSide 1 = ADP + phosphate + cellular proteinSide 2.. Functionally, part of the Sec protein translocase complex. Interacts with the SecYEG preprotein conducting channel. Has a central role in coupling the hydrolysis of ATP to the transfer of proteins into and across the cell membrane, serving as an ATP-driven molecular motor driving the stepwise translocation of polypeptide chains across the membrane. In Mesomycoplasma hyopneumoniae (strain 232) (Mycoplasma hyopneumoniae), this protein is Protein translocase subunit SecA.